Here is an 83-residue protein sequence, read N- to C-terminus: Putative beta-neurotoxin RjAa17f (83 aa).

Residues 1 to 18 (MKILIFIIASFMLIGVEC) form the signal peptide. The region spanning 19-82 (KEGYPMGRNG…VWDFSNIKCR (64 aa)) is the LCN-type CS-alpha/beta domain. Disulfide bonds link Cys-29/Cys-81, Cys-33/Cys-55, Cys-40/Cys-62, and Cys-44/Cys-64.

It belongs to the long (4 C-C) scorpion toxin superfamily. Sodium channel inhibitor family. Beta subfamily. As to expression, expressed by the venom gland.

It localises to the secreted. In terms of biological role, beta toxins bind voltage-independently at site-4 of sodium channels (Nav) and shift the voltage of activation toward more negative potentials thereby affecting sodium channel activation and promoting spontaneous and repetitive firing. This is Putative beta-neurotoxin RjAa17f from Rhopalurus junceus (Caribbean blue scorpion).